The sequence spans 409 residues: Putative kinase Y4dM (409 aa).

Asp-293 (proton acceptor) is an active-site residue.

The protein belongs to the HipA Ser/Thr kinase family.

This chain is Putative kinase Y4dM, found in Sinorhizobium fredii (strain NBRC 101917 / NGR234).